A 103-amino-acid chain; its full sequence is Large ribosomal subunit protein uL24 (103 aa).

This sequence belongs to the universal ribosomal protein uL24 family. As to quaternary structure, part of the 50S ribosomal subunit.

One of two assembly initiator proteins, it binds directly to the 5'-end of the 23S rRNA, where it nucleates assembly of the 50S subunit. Functionally, one of the proteins that surrounds the polypeptide exit tunnel on the outside of the subunit. This chain is Large ribosomal subunit protein uL24, found in Haemophilus influenzae (strain PittEE).